The following is a 369-amino-acid chain: Methionine import ATP-binding protein MetN 2 (369 aa).

The ABC transporter domain maps to 33–270; that stretch reads VRFIGLGKTY…PRHEVTRTLL (238 aa). Position 67 to 74 (67 to 74) interacts with ATP; sequence GRSGAGKS.

Belongs to the ABC transporter superfamily. Methionine importer (TC 3.A.1.24) family. As to quaternary structure, the complex is composed of two ATP-binding proteins (MetN), two transmembrane proteins (MetI) and a solute-binding protein (MetQ).

It localises to the cell inner membrane. It carries out the reaction L-methionine(out) + ATP + H2O = L-methionine(in) + ADP + phosphate + H(+). The catalysed reaction is D-methionine(out) + ATP + H2O = D-methionine(in) + ADP + phosphate + H(+). In terms of biological role, part of the ABC transporter complex MetNIQ involved in methionine import. Responsible for energy coupling to the transport system. The polypeptide is Methionine import ATP-binding protein MetN 2 (Pseudomonas putida (strain ATCC 47054 / DSM 6125 / CFBP 8728 / NCIMB 11950 / KT2440)).